The chain runs to 426 residues: tRNA(Ile)-lysidine synthase (426 aa).

Residue 19–24 (SGGLDS) coordinates ATP.

It belongs to the tRNA(Ile)-lysidine synthase family.

The protein localises to the cytoplasm. It catalyses the reaction cytidine(34) in tRNA(Ile2) + L-lysine + ATP = lysidine(34) in tRNA(Ile2) + AMP + diphosphate + H(+). Functionally, ligates lysine onto the cytidine present at position 34 of the AUA codon-specific tRNA(Ile) that contains the anticodon CAU, in an ATP-dependent manner. Cytidine is converted to lysidine, thus changing the amino acid specificity of the tRNA from methionine to isoleucine. The sequence is that of tRNA(Ile)-lysidine synthase from Neisseria meningitidis serogroup A / serotype 4A (strain DSM 15465 / Z2491).